The primary structure comprises 340 residues: Annexin A2-A (340 aa).

The segment at 2–25 (ALIHEILGKLSLEGNQSCARQSAL) is P10 binding site. 4 Annexin repeats span residues 34–105 (FDAE…GLIK), 106–177 (TRPQ…ALAK), 190–262 (EKID…NLVQ), and 266–337 (NKPL…NLCG).

This sequence belongs to the annexin family. Tetramer of 2 light chains (p10 proteins) and 2 heavy chains (p36 proteins).

The protein localises to the secreted. It localises to the extracellular space. It is found in the extracellular matrix. The protein resides in the basement membrane. Calcium-regulated membrane-binding protein whose affinity for calcium is greatly enhanced by anionic phospholipids. It binds two calcium ions with high affinity. This Xenopus laevis (African clawed frog) protein is Annexin A2-A (anxa2-a).